The following is a 301-amino-acid chain: tRNA-cytidine(32) 2-sulfurtransferase (301 aa).

A PP-loop motif motif is present at residues 55–60 (SGGKDS). Cys-130, Cys-133, and Cys-221 together coordinate [4Fe-4S] cluster.

Belongs to the TtcA family. As to quaternary structure, homodimer. Mg(2+) is required as a cofactor. It depends on [4Fe-4S] cluster as a cofactor.

The protein resides in the cytoplasm. It carries out the reaction cytidine(32) in tRNA + S-sulfanyl-L-cysteinyl-[cysteine desulfurase] + AH2 + ATP = 2-thiocytidine(32) in tRNA + L-cysteinyl-[cysteine desulfurase] + A + AMP + diphosphate + H(+). It functions in the pathway tRNA modification. Catalyzes the ATP-dependent 2-thiolation of cytidine in position 32 of tRNA, to form 2-thiocytidine (s(2)C32). The sulfur atoms are provided by the cysteine/cysteine desulfurase (IscS) system. This Acinetobacter baylyi (strain ATCC 33305 / BD413 / ADP1) protein is tRNA-cytidine(32) 2-sulfurtransferase.